A 441-amino-acid polypeptide reads, in one-letter code: FBD-associated F-box protein At5g18780 (441 aa).

The F-box domain occupies 10–56 (EDRISILPEPLLCHILSFLRTKDSVRTSVLSSRWRDLWLWVPRLDLD). The FBD domain occupies 366 to 410 (LPRCLISSLASVDIESPITDKATELKLVSYLLENSTTLKKLVLRL).

This Arabidopsis thaliana (Mouse-ear cress) protein is FBD-associated F-box protein At5g18780.